The chain runs to 325 residues: uncharacterized protein (325 aa).

Tyr59 (proton donor) is an active-site residue. His117 contacts substrate.

It belongs to the aldo/keto reductase family.

The protein localises to the cytoplasm. It localises to the nucleus. This is an uncharacterized protein from Schizosaccharomyces pombe (strain 972 / ATCC 24843) (Fission yeast).